Here is a 99-residue protein sequence, read N- to C-terminus: U8-agatoxin-Ao1a (99 aa).

Positions 1–19 are cleaved as a signal peptide; that stretch reads MKSLLFVTIAVYFVAQAVT. Positions 20–45 are excised as a propeptide; it reads ANLLSNFLGSSLIDDDKGNMHKLYKR.

The protein belongs to the neurotoxin 02 (plectoxin) family. Post-translationally, contains 5 disulfide bonds. As to expression, expressed by the venom gland.

The protein localises to the secreted. This Agelena orientalis (Funnel-web spider) protein is U8-agatoxin-Ao1a.